We begin with the raw amino-acid sequence, 1545 residues long: Dual oxidase 2 (1545 aa).

A signal peptide spans 1–25; sequence MLCIRPEALVLLGALLTVPLDPVGG. Residues 26-601 are Extracellular-facing; that stretch reads QDALSLTWEV…EGSGPGFGIT (576 aa). Positions 30-596 are peroxidase-like; mediates peroxidase activity; it reads SLTWEVQRYD…VIQYFEGSGP (567 aa). 6 N-linked (GlcNAc...) asparagine glycosylation sites follow: Asn-100, Asn-312, Asn-348, Asn-358, Asn-455, and Asn-549. Cys-124 and Cys-1159 are disulfide-bonded. The chain crosses the membrane as a helical span at residues 602–622; that stretch reads IVALCCLPLMSLLISGVVAYF. Residues 623–1037 lie on the Cytoplasmic side of the membrane; that stretch reads RSRERKKLQK…YKRFVENYRR (415 aa). 3 consecutive EF-hand domains span residues 819–854, 855–890, and 899–934; these read PQDMFVESMFSLADKDGNGYLSFREFLDVLVVFMKG, SPEDKSRLMFTMYDLDGNGFLSKDEFFTMIRSFIEI, and QLTEVVESMFREAGFQDKQELTWEDFHFMLRDHDSE. Ca(2+) contacts are provided by Asp-832, Asp-834, Asn-836, Tyr-838, Glu-843, Asp-868, Asp-870, Asn-872, and Glu-879. An interaction with TXNDC11 region spans residues 960–1242; that stretch reads RVSFIIRTPE…GSFALIQLPR (283 aa). The chain crosses the membrane as a helical span at residues 1038-1058; it reads HIVCVAIFSAICAGLFVERAY. Residues 1059–1074 lie on the Extracellular side of the membrane; sequence YYAFVSPPSGIAETTF. The helical transmembrane segment at 1075–1097 threads the bilayer; it reads VGIILSRGTAASVSFMFSYILLT. One can recognise a Ferric oxidoreductase domain in the interval 1081–1263; the sequence is RGTAASVSFM…YVGDKLVSLS (183 aa). Residues 1098–1125 are Cytoplasmic-facing; sequence MCRNLITFLRETFLNHYVPFDAAVDFHR. The chain crosses the membrane as a helical span at residues 1126–1148; sequence WIAMAALVLAILHSVGHVVNVYI. The Extracellular segment spans residues 1149–1182; that stretch reads FSVSPLSLLACVFPSVFVNDGSKLPQKFYWWFFQ. A helical membrane pass occupies residues 1183-1203; it reads TIPGMTGVLLLVVLAIMYVFA. Residues 1204 to 1220 are Cytoplasmic-facing; that stretch reads SPYFRRRSFRGFWLTHH. Residues 1221–1241 form a helical membrane-spanning segment; that stretch reads FYILLYVLLIIHGSFALIQLP. Position 1242 (Arg-1242) is a topological domain, extracellular. A helical transmembrane segment spans residues 1243–1263; the sequence is FHIFFLVPALIYVGDKLVSLS. Positions 1264-1370 constitute an FAD-binding FR-type domain; sequence RKKVEISVVK…DGPFGEGHQE (107 aa). Residues 1264 to 1545 are Cytoplasmic-facing; the sequence is RKKVEISVVK…THFVHHYENF (282 aa).

In the N-terminal section; belongs to the peroxidase family. Heterodimer with DUOXA2; disulfide-linked. Interacts with TXNDC11, TPO and CYBA. Post-translationally, N-glycosylated. As to expression, expressed in thyroid, and the digestive tract especially in stomach, cecum and sigmoidal colon (at protein level). Expressed in thyroid.

It is found in the apical cell membrane. Its subcellular location is the cell junction. The enzyme catalyses NADH + O2 + H(+) = H2O2 + NAD(+). It carries out the reaction NADPH + O2 + H(+) = H2O2 + NADP(+). It functions in the pathway hormone biosynthesis; thyroid hormone biosynthesis. The NADPH oxidase activity is calcium-dependent. Peroxidase activity is inhibited by aminobenzohydrazide. Its function is as follows. Generates hydrogen peroxide which is required for the activity of thyroid peroxidase/TPO and lactoperoxidase/LPO. Plays a role in thyroid hormones synthesis and lactoperoxidase-mediated antimicrobial defense at the surface of mucosa. May have its own peroxidase activity through its N-terminal peroxidase-like domain. The polypeptide is Dual oxidase 2 (DUOX2) (Sus scrofa (Pig)).